Reading from the N-terminus, the 161-residue chain is Phosphopantetheine adenylyltransferase (161 aa).

Threonine 9 contributes to the substrate binding site. ATP is bound by residues 9 to 10 (TF) and histidine 17. Residues lysine 41, leucine 73, and arginine 87 each contribute to the substrate site. Residues 88-90 (GLR), glutamate 98, and 123-129 (YQFISGT) contribute to the ATP site.

This sequence belongs to the bacterial CoaD family. In terms of assembly, homohexamer. Requires Mg(2+) as cofactor.

It localises to the cytoplasm. It carries out the reaction (R)-4'-phosphopantetheine + ATP + H(+) = 3'-dephospho-CoA + diphosphate. It participates in cofactor biosynthesis; coenzyme A biosynthesis; CoA from (R)-pantothenate: step 4/5. In terms of biological role, reversibly transfers an adenylyl group from ATP to 4'-phosphopantetheine, yielding dephospho-CoA (dPCoA) and pyrophosphate. This Cupriavidus necator (strain ATCC 17699 / DSM 428 / KCTC 22496 / NCIMB 10442 / H16 / Stanier 337) (Ralstonia eutropha) protein is Phosphopantetheine adenylyltransferase.